The sequence spans 231 residues: Orotate phosphoribosyltransferase (231 aa).

Residues Lys27, 79 to 80 (YK), Arg106, Lys107, Lys110, His112, and 133 to 141 (DDVMTAGTA) each bind 5-phospho-alpha-D-ribose 1-diphosphate. Orotate contacts are provided by Thr137 and Arg166.

The protein belongs to the purine/pyrimidine phosphoribosyltransferase family. PyrE subfamily. Homodimer. Mg(2+) serves as cofactor.

The enzyme catalyses orotidine 5'-phosphate + diphosphate = orotate + 5-phospho-alpha-D-ribose 1-diphosphate. It functions in the pathway pyrimidine metabolism; UMP biosynthesis via de novo pathway; UMP from orotate: step 1/2. Functionally, catalyzes the transfer of a ribosyl phosphate group from 5-phosphoribose 1-diphosphate to orotate, leading to the formation of orotidine monophosphate (OMP). This is Orotate phosphoribosyltransferase from Bifidobacterium longum (strain DJO10A).